A 531-amino-acid polypeptide reads, in one-letter code: Phosphomethylpyrimidine synthase (531 aa).

Substrate-binding positions include Asn-167, Met-196, Tyr-225, His-261, 281–283, 322–325, and Glu-361; these read SRG and DALR. Zn(2+) is bound at residue His-365. Tyr-388 is a substrate binding site. Position 429 (His-429) interacts with Zn(2+). [4Fe-4S] cluster-binding residues include Cys-511, Cys-514, and Cys-519.

It belongs to the ThiC family. The cofactor is [4Fe-4S] cluster.

It catalyses the reaction 5-amino-1-(5-phospho-beta-D-ribosyl)imidazole + S-adenosyl-L-methionine = 4-amino-2-methyl-5-(phosphooxymethyl)pyrimidine + CO + 5'-deoxyadenosine + formate + L-methionine + 3 H(+). Its pathway is cofactor biosynthesis; thiamine diphosphate biosynthesis. Functionally, catalyzes the synthesis of the hydroxymethylpyrimidine phosphate (HMP-P) moiety of thiamine from aminoimidazole ribotide (AIR) in a radical S-adenosyl-L-methionine (SAM)-dependent reaction. The chain is Phosphomethylpyrimidine synthase from Chlorobium chlorochromatii (strain CaD3).